A 256-amino-acid polypeptide reads, in one-letter code: 5'-nucleotidase SurE (256 aa).

Positions 9, 10, 40, and 94 each coordinate a divalent metal cation.

Belongs to the SurE nucleotidase family. A divalent metal cation serves as cofactor.

The protein localises to the cytoplasm. The enzyme catalyses a ribonucleoside 5'-phosphate + H2O = a ribonucleoside + phosphate. Its function is as follows. Nucleotidase that shows phosphatase activity on nucleoside 5'-monophosphates. In Campylobacter fetus subsp. fetus (strain 82-40), this protein is 5'-nucleotidase SurE.